The chain runs to 118 residues: Small ribosomal subunit protein uS13 (118 aa).

The tract at residues 94-118 (GLPLRGQRTKTNARTRKGPRKPIRK) is disordered.

This sequence belongs to the universal ribosomal protein uS13 family. In terms of assembly, part of the 30S ribosomal subunit. Forms a loose heterodimer with protein S19. Forms two bridges to the 50S subunit in the 70S ribosome.

Its function is as follows. Located at the top of the head of the 30S subunit, it contacts several helices of the 16S rRNA. In the 70S ribosome it contacts the 23S rRNA (bridge B1a) and protein L5 of the 50S subunit (bridge B1b), connecting the 2 subunits; these bridges are implicated in subunit movement. Contacts the tRNAs in the A and P-sites. The sequence is that of Small ribosomal subunit protein uS13 from Alcanivorax borkumensis (strain ATCC 700651 / DSM 11573 / NCIMB 13689 / SK2).